The sequence spans 118 residues: uncharacterized protein (118 aa).

The span at 1–12 shows a compositional bias: polar residues; that stretch reads MADDNVSFTDQG. A disordered region spans residues 1-63; it reads MADDNVSFTD…KKGKTKKVRK (63 aa). Positions 39–63 are enriched in basic residues; sequence TKKKGKKNKKSKKKAKKGKTKKVRK. A helical transmembrane segment spans residues 81–101; sequence FCAGIIVAMIMLFVIIIYGII.

The protein localises to the membrane. This is an uncharacterized protein from Caenorhabditis elegans.